A 463-amino-acid polypeptide reads, in one-letter code: Chaperone SurA (463 aa).

The signal sequence occupies residues 1-25 (MTKPFSVLLASLLVITSTVSPLASA). PpiC domains are found at residues 174-276 (GSQY…KLVE) and 289-388 (LTEY…QRVG). Disordered stretches follow at residues 329–348 (ATAK…GDLG) and 434–463 (GDRA…QPTR). Residues 440–452 (DATAAPEPAAAPA) show a composition bias toward low complexity. The span at 453–463 (APTPPPAQPTR) shows a compositional bias: pro residues.

Its subcellular location is the periplasm. It carries out the reaction [protein]-peptidylproline (omega=180) = [protein]-peptidylproline (omega=0). Functionally, chaperone involved in the correct folding and assembly of outer membrane proteins. Recognizes specific patterns of aromatic residues and the orientation of their side chains, which are found more frequently in integral outer membrane proteins. May act in both early periplasmic and late outer membrane-associated steps of protein maturation. The sequence is that of Chaperone SurA from Xanthomonas campestris pv. campestris (strain 8004).